The primary structure comprises 142 residues: Baculoviral IAP repeat-containing protein 5 (142 aa).

A BIR repeat occupies 18–88; that stretch reads RISTFKNWPF…KHSSGCAFLS (71 aa). Position 20 is a phosphoserine; by AURKC (Ser20). Lys23 is subject to N6-acetyllysine. Position 34 is a phosphothreonine; by CDK1 and CDK15 (Thr34). Thr48 carries the phosphothreonine modification. Residues Cys57, Cys60, His77, and Cys84 each coordinate Zn(2+). Residues Lys90, Lys110, Lys112, and Lys115 each carry the N6-acetyllysine modification. Thr117 carries the post-translational modification Phosphothreonine; by AURKB. Position 129 is an N6-acetyllysine (Lys129).

The protein belongs to the IAP family. In terms of assembly, monomer or homodimer. Exists as a homodimer in the apo state and as a monomer in the CPC-bound state. The monomer protects cells against apoptosis more efficiently than the dimer. Only the dimeric form is capable of enhancing tubulin stability in cells. When phosphorylated, interacts with LAMTOR5/HBXIP; the resulting complex binds pro-CASP9, as well as active CASP9, but much less efficiently. Component of the chromosomal passenger complex (CPC) composed of at least BIRC5/survivin, CDCA8/borealin, INCENP, AURKB or AURKC; in the complex forms a triple-helix bundle-based subcomplex with INCENP and CDCA8. Interacts with JTB. Interacts (via BIR domain) with histone H3 phosphorylated at 'Thr-3' (H3pT3). Interacts with EVI5. Interacts with GTP-bound RAN in both the S and M phases of the cell cycle. Interacts with USP9X. Interacts with tubulin. Interacts with BIRC2/c-IAP1. The acetylated form at Lys-129 interacts with STAT3. The monomeric form deacetylated at Lys-129 interacts with XPO1/CRM1. The monomeric form interacts with XIAP/BIRC4. Both the dimeric and monomeric form can interact with DIABLO/SMAC. Interacts with BIRC6/bruce. Interacts with FBXL7; this interaction facilitates the polyubiquitination and subsequent proteasomal degradation of BIRC5 by the SCF(FBXL7) E3 ubiquitin-protein ligase complex. Post-translationally, ubiquitinated by the Cul9-RING ubiquitin-protein ligase complex, leading to its degradation. Ubiquitination is required for centrosomal targeting. Deubiquitinated by USP35 or USP38; leading to stabilization. Acetylation at Lys-129 results in its homodimerization, while deacetylation promotes the formation of monomers which heterodimerize with XPO1/CRM1 which facilitates its nuclear export. The acetylated form represses STAT3 transactivation. The dynamic equilibrium between its acetylation and deacetylation at Lys-129 determines its interaction with XPO1/CRM1, its subsequent subcellular localization, and its ability to inhibit STAT3 transactivation. In terms of processing, in vitro phosphorylation at Thr-117 by AURKB prevents interaction with INCENP and localization to mitotic chromosomes. Phosphorylation at Thr-48 by CK2 is critical for its mitotic and anti-apoptotic activities. Phosphorylation at Thr-34 by CDK15 is critical for its anti-apoptotic activity. Phosphorylation at Ser-20 by AURKC is critical for regulation of proper chromosome alignment and segregation, and possibly cytokinesis.

It is found in the cytoplasm. Its subcellular location is the nucleus. The protein localises to the chromosome. The protein resides in the centromere. It localises to the cytoskeleton. It is found in the spindle. Its subcellular location is the kinetochore. The protein localises to the midbody. Functionally, multitasking protein that has dual roles in promoting cell proliferation and preventing apoptosis. Component of a chromosome passage protein complex (CPC) which is essential for chromosome alignment and segregation during mitosis and cytokinesis. Acts as an important regulator of the localization of this complex; directs CPC movement to different locations from the inner centromere during prometaphase to midbody during cytokinesis and participates in the organization of the center spindle by associating with polymerized microtubules. Involved in the recruitment of CPC to centromeres during early mitosis via association with histone H3 phosphorylated at 'Thr-3' (H3pT3) during mitosis. The complex with RAN plays a role in mitotic spindle formation by serving as a physical scaffold to help deliver the RAN effector molecule TPX2 to microtubules. May counteract a default induction of apoptosis in G2/M phase. The acetylated form represses STAT3 transactivation of target gene promoters. May play a role in neoplasia. Inhibitor of CASP3 and CASP7. Essential for the maintenance of mitochondrial integrity and function. This is Baculoviral IAP repeat-containing protein 5 (BIRC5) from Pongo abelii (Sumatran orangutan).